Consider the following 451-residue polypeptide: uncharacterized protein (451 aa).

Positions 1 to 18 (MRTRITLALAVLLLLLAG) are cleaved as a signal peptide. Cys19 carries N-palmitoyl cysteine lipidation. Cys19 carries S-diacylglycerol cysteine lipidation. The tract at residues 424-451 (TSADPPPGVPRAGKRNIRDATSRLPSTP) is disordered.

It is found in the cell membrane. Functionally, may participate in oleandomycin glycosylation and secretion during antibiotic production. This is an uncharacterized protein from Streptomyces antibioticus.